The following is a 159-amino-acid chain: Protein-export protein SecB (159 aa).

It belongs to the SecB family. As to quaternary structure, homotetramer, a dimer of dimers. One homotetramer interacts with 1 SecA dimer.

The protein resides in the cytoplasm. One of the proteins required for the normal export of preproteins out of the cell cytoplasm. It is a molecular chaperone that binds to a subset of precursor proteins, maintaining them in a translocation-competent state. It also specifically binds to its receptor SecA. This is Protein-export protein SecB from Nitrosospira multiformis (strain ATCC 25196 / NCIMB 11849 / C 71).